The sequence spans 295 residues: Protein PHR1-LIKE 2 (295 aa).

Positions 38–98 constitute an HTH myb-type domain; the sequence is TDPKPRLRWT…HLQKFRLGRQ (61 aa). Positions 69–94 form a DNA-binding region, H-T-H motif; that stretch reads PKTIMRTMGVKGLTLYHLKSHLQKFR. The interval 96-138 is disordered; sequence GRQAGKESTENSKDASCVGESQDTGSSSTSSMRMAQQEQNEGY. Residues 99–108 are compositionally biased toward basic and acidic residues; the sequence is AGKESTENSK. Positions 127 to 138 are enriched in polar residues; that stretch reads MRMAQQEQNEGY. A coiled-coil region spans residues 141-161; the sequence is TEALRAQMEVQRRLHDQLEVQ. The short motif at 154-159 is the LHEQLE element; the sequence is LHDQLE.

The protein belongs to the MYB-CC family. Homo- and heterodimers. Interacts with PHL3, but not with PHR1.

The protein resides in the nucleus. Functionally, transcriptional activator. Acts redundantly with PHR1 as a key component of the central regulatory system controlling transcriptional responses to Pi starvation. Binds in a sequence-specific manner to phosphate starvation-regulated promoters. This chain is Protein PHR1-LIKE 2, found in Arabidopsis thaliana (Mouse-ear cress).